Consider the following 426-residue polypeptide: MVQLDRFEILFNNPEQAYFAGQEISGKVIIENKEPKKVNEILLELKGRARTYWTKHSGKSRKHCSHSEPYFLEQFNPGYTHKFTVVKDGKEKERILPAGIHQVPFSYTLPKSLPSSFEGEFGHIRYTCKAICERPWDFDIVSRKAFTVVGIEDINSDPKLNEPATCVESNHAVTFCCRSAGSVTGEIRISKCGYTPGEKIDVSFKVINLSSKTRTTALRFVQQTTYKAKTFAGHEHIKNVVRVISKIDKGEVPGGSTTEWQEESITIPSLPPKLGKCKILSVTYSVELEVEQTLTVPCPIVIGSIPQLSQLLIHSKQSVQSAGNGSLPKSSIKDSPPKWDSESCVQVTITDESGQLVEELGNEMEALLSARKRVRMPSSILSELYPTMPSPYYKESFFGASDISEEKEQAQFGEASFAPKYPFYTD.

A compositionally biased stretch (polar residues) spans 320–329; it reads QSAGNGSLPK. The segment at 320–340 is disordered; that stretch reads QSAGNGSLPKSSIKDSPPKWD. A compositionally biased stretch (basic and acidic residues) spans 331–340; the sequence is SIKDSPPKWD.

It belongs to the arrestin family. In terms of assembly, interacts with tax-6. Post-translationally, phosphorylated. Dephosphorylated by tax-6 in vitro. As to expression, expressed from the comma stage to adulthood in the nervous system, including sensory neurons and interneurons posterior to the nerve ring, dorsal and ventral nerve cords, tail ganglia and, CEP, HSN, ASK, ADL, ASH and ASJ neurons.

Functionally, involved in several behavioral responses including chemotaxis towards lysine and adaptation to repeated osmotic stress. In addition, plays a role in resuming egg-laying and locomotion after starvation. The protein is Arrestin domain-containing protein 17 of Caenorhabditis elegans.